Consider the following 359-residue polypeptide: Peptide chain release factor 1 (359 aa).

An N5-methylglutamine modification is found at Gln-236.

Belongs to the prokaryotic/mitochondrial release factor family. Methylated by PrmC. Methylation increases the termination efficiency of RF1.

It localises to the cytoplasm. In terms of biological role, peptide chain release factor 1 directs the termination of translation in response to the peptide chain termination codons UAG and UAA. The chain is Peptide chain release factor 1 from Malacoplasma penetrans (strain HF-2) (Mycoplasma penetrans).